A 934-amino-acid polypeptide reads, in one-letter code: 3-hydroxy-3-methylglutaryl-coenzyme A reductase (934 aa).

The Lumenal portion of the chain corresponds to 1–111 (MFYHGASANQ…VLNLVRGAET (111 aa)). The helical transmembrane segment at 112–132 (FDIALVTCAYIAMFYTLFNLF) threads the bilayer. The SSD domain maps to 113–280 (DIALVTCAYI…STFLSAILSL (168 aa)). Residues 133 to 141 (ARMRAVGSK) lie on the Cytoplasmic side of the membrane. The helical transmembrane segment at 142–162 (VWLGLSTLVSSFFAFLFALYI) threads the bilayer. Over 163-168 (TTRVLD) the chain is Lumenal. Residues 169–189 (LSIPFLSLSEGIPFFVAVVGF) traverse the membrane as a helical segment. The Cytoplasmic portion of the chain corresponds to 190-231 (NNKILLAEKVLQNQLNAQSSKNDAPTVLYQALREQGPLLLRD). A helical membrane pass occupies residues 232–252 (HLFMITAFLGCSFYASYLDGL). The Lumenal segment spans residues 253-256 (KNFC). The helical transmembrane segment at 257-277 (ILAALILAFDILTTSTFLSAI) threads the bilayer. The Cytoplasmic segment spans residues 278 to 334 (LSLKLEINQIHRSTLLREQLEDDGLTETTVDDVLKSNSLAGTKTFTDAPSTLVTVAK). Residues 335 to 355 (VAGVSVFFGLHFYGFGSAWLS) traverse the membrane as a helical segment. Over 356–421 (DLSAGNETND…GLISTAARDK (66 aa)) the chain is Lumenal. N-linked (GlcNAc...) asparagine glycans are attached at residues N361, N364, and N382. The helical transmembrane segment at 422–442 (YISKFILFAFAVSASINVYLL) threads the bilayer. The Cytoplasmic segment spans residues 443 to 934 (NVARIHTTRL…MQHNRAAAKK (492 aa)). The active-site Charge relay system is the E618. 624-630 (SAMRGCK) contributes to the CoA binding site. NADP(+) is bound by residues 685 to 687 (SRF) and 712 to 720 (DAMGMNMIS). The Charge relay system role is filled by K752. 781–783 (VLK) is a CoA binding site. D828 (charge relay system) is an active-site residue. 923 to 924 (SH) serves as a coordination point for CoA. H924 serves as the catalytic Proton donor. 928 to 929 (NR) lines the NADP(+) pocket.

This sequence belongs to the HMG-CoA reductase family.

The protein resides in the endoplasmic reticulum membrane. The catalysed reaction is (R)-mevalonate + 2 NADP(+) + CoA = (3S)-3-hydroxy-3-methylglutaryl-CoA + 2 NADPH + 2 H(+). Its pathway is metabolic intermediate biosynthesis; (R)-mevalonate biosynthesis; (R)-mevalonate from acetyl-CoA: step 3/3. Functionally, HMG-CoA reductase; part of the first module of ergosterol biosynthesis pathway that includes the early steps of the pathway, conserved across all eukaryotes, and which results in the formation of mevalonate from acetyl-coenzyme A (acetyl-CoA). In this module, the cytosolic acetyl-CoA acetyltransferase catalyzes the formation of acetoacetyl-CoA. The hydroxymethylglutaryl-CoA synthase then condenses acetyl-CoA with acetoacetyl-CoA to form HMG-CoA. The rate-limiting step of the early module is the reduction to mevalonate by the 3-hydroxy-3-methylglutaryl-coenzyme A (HMG-CoA) reductase. This Cyberlindnera jadinii (Torula yeast) protein is 3-hydroxy-3-methylglutaryl-coenzyme A reductase.